We begin with the raw amino-acid sequence, 405 residues long: MTSRRPDSFEGLGYRGREDPAFSGGYSGRSFNNSSSSDLQNWVTTPPDIPGSRNLHFDDRTPQFETAPDEAQSAAPPSEQLNRFAGFGIGLASLFTENVLAHPCIVFRRQCQVNYHARCYHLSPMTAISVMYNVTKTQGPKALWKGMGSTFVVQGVTLGTEGIISECTPLPRELSHKWNPKQVVGHLVLKGLTYVVAMPFYSASLIETVQSEIIRDNPGILDCVKEGLGRVMGMGIPHSKRLLPLWNLVLPTVLHGILHYIISSSIQRLVLYLLRRRNNGSPKHSSPGSGMDTVQSMLDAYFPELMASFAASLCADVLLFPLETVLHRLHIQGTRTIIDNTDLGFEVLPINTQYEGMRDCINAIRREEGTMGFYKGFGSIVVQYSLHATVLQITKMIYSTLLRNA.

A disordered region spans residues 1–77 (MTSRRPDSFE…PDEAQSAAPP (77 aa)). The segment covering 22–37 (FSGGYSGRSFNNSSSS) has biased composition (low complexity). A Solcar 1 repeat occupies 80–171 (QLNRFAGFGI…GIISECTPLP (92 aa)). Transmembrane regions (helical) follow at residues 87–107 (FGIG…CIVF), 151–171 (FVVQ…TPLP), 183–203 (VVGH…FYSA), 242–262 (LLPL…HYII), 302–322 (FPEL…LFPL), and 371–391 (MGFY…ATVL). Residues 299–401 (DAYFPELMAS…QITKMIYSTL (103 aa)) form a Solcar 2 repeat.

This sequence belongs to the mitochondrial carrier (TC 2.A.29) family.

It localises to the mitochondrion outer membrane. Functionally, transmembrane protein of the mitochondrial outer membrane that controls mitochondrial organization. May regulate the biogenesis and dynamics of mitochondrial cristae, the inwards folds of the inner mitochondrial membrane. Could regulate mitochondrial lipid homeostasis and thereby mitochondrial fission. The polypeptide is Mitochondrial outer membrane protein SLC25A46 (slc25a46) (Danio rerio (Zebrafish)).